A 177-amino-acid polypeptide reads, in one-letter code: Large ribosomal subunit protein uL6 (177 aa).

Belongs to the universal ribosomal protein uL6 family. Part of the 50S ribosomal subunit.

In terms of biological role, this protein binds to the 23S rRNA, and is important in its secondary structure. It is located near the subunit interface in the base of the L7/L12 stalk, and near the tRNA binding site of the peptidyltransferase center. The protein is Large ribosomal subunit protein uL6 of Neisseria meningitidis serogroup C (strain 053442).